The primary structure comprises 265 residues: MTTIKVVKICGAMESRGLNPLDHLPPPASSNKPLTPFSITDILSKPTVKRFHRIHRLPASDRVRQSITVSRQTLITQASPLCALQELASKTFKGLELGVLQAAEGKDGLKLFGQRDSPKKRRKSRTAFTNHQLYELEKRFLHQKYLSPADRDQIAHQLGLTNAQVITWFQNRRAKLKRDLEEMKADVESVRSTGLVPLDKLAKLADLERCAAAGATGNPGPQCSPRLGHEYKTVHKLCLSPMSSLSDHTSQDCSEDEEVEIDVDV.

Residues 121-180 (RRKSRTAFTNHQLYELEKRFLHQKYLSPADRDQIAHQLGLTNAQVITWFQNRRAKLKRDL) constitute a DNA-binding region (homeobox).

It is found in the nucleus. Functionally, transcription factor required for the development of hypaxial muscles. This is Transcription factor LBX1b from Danio rerio (Zebrafish).